The sequence spans 397 residues: MNIIKGNIASPLGFSADGLHAGFKKKKLDFGWIVSEVPANVAGVFTTNKVIAAPLKLTKNSIEKSGKMQAIVVNSGIANSCTGKQGEKDAFKMQQLAANKLQIQPEYVGVASTGVIGKVMPMSILKNGFSKLVKNGNADDFAKAILTTDTHTKTCVVNEEFGSDTVTMAGVAKGSGMIHPNLATMLAFITCDANISSQTLQQALKDVVEVTFNQITVDGDTSTNDMVLVMSNGCTNNNEIKKDSEDYYKFKQMLLYIMTDLAKSIARDGEGASKLIEVTVKGAKESSAARMIAKSVVGSSLVKTAIFGEDPNWGRIIAAAGYAKTYFDINQVDIFIGRIPVLIRSSPVKYDKEEIQEIMSAEEISIQLDLHQGNCEGQAWGCDLSYDYVKINALYTT.

Substrate contacts are provided by T147, K173, T184, E270, N392, and T397. T184 (nucleophile) is an active-site residue.

Belongs to the ArgJ family. As to quaternary structure, heterotetramer of two alpha and two beta chains.

Its subcellular location is the cytoplasm. It carries out the reaction N(2)-acetyl-L-ornithine + L-glutamate = N-acetyl-L-glutamate + L-ornithine. The catalysed reaction is L-glutamate + acetyl-CoA = N-acetyl-L-glutamate + CoA + H(+). Its pathway is amino-acid biosynthesis; L-arginine biosynthesis; L-ornithine and N-acetyl-L-glutamate from L-glutamate and N(2)-acetyl-L-ornithine (cyclic): step 1/1. The protein operates within amino-acid biosynthesis; L-arginine biosynthesis; N(2)-acetyl-L-ornithine from L-glutamate: step 1/4. Catalyzes two activities which are involved in the cyclic version of arginine biosynthesis: the synthesis of N-acetylglutamate from glutamate and acetyl-CoA as the acetyl donor, and of ornithine by transacetylation between N(2)-acetylornithine and glutamate. The chain is Arginine biosynthesis bifunctional protein ArgJ from Staphylococcus epidermidis (strain ATCC 35984 / DSM 28319 / BCRC 17069 / CCUG 31568 / BM 3577 / RP62A).